We begin with the raw amino-acid sequence, 273 residues long: Serine acetyltransferase (273 aa).

Belongs to the transferase hexapeptide repeat family. As to quaternary structure, part of the cysteine synthase complex formed at a ratio of 1 copy of this protein and 2 copies of O-acetylserine sulfhydrylase (cysK). The complex reversibly dissociates in the presence of O-acetyl-L-serine in the absence of hydrogen sulfide.

The protein localises to the cytoplasm. The catalysed reaction is L-serine + acetyl-CoA = O-acetyl-L-serine + CoA. The protein operates within amino-acid biosynthesis; L-cysteine biosynthesis; L-cysteine from L-serine: step 1/2. Its activity is regulated as follows. Sensitive to feedback inhibition by L-cysteine. The chain is Serine acetyltransferase (cysE) from Salmonella typhimurium (strain LT2 / SGSC1412 / ATCC 700720).